The chain runs to 409 residues: Serine/threonine transporter SstT (409 aa).

9 helical membrane passes run 24-44 (LALG…AGLF), 48-68 (FVGA…AATI), 82-102 (IIVL…IAGM), 142-162 (AIAN…GAAL), 194-214 (LGIF…ALAG), 218-238 (LLAV…PAIV), 292-312 (IPLG…VLAM), 319-339 (GIQV…VSAC), and 365-385 (VAMQ…SAET).

This sequence belongs to the dicarboxylate/amino acid:cation symporter (DAACS) (TC 2.A.23) family.

It localises to the cell inner membrane. The enzyme catalyses L-serine(in) + Na(+)(in) = L-serine(out) + Na(+)(out). It catalyses the reaction L-threonine(in) + Na(+)(in) = L-threonine(out) + Na(+)(out). In terms of biological role, involved in the import of serine and threonine into the cell, with the concomitant import of sodium (symport system). The chain is Serine/threonine transporter SstT from Neisseria gonorrhoeae (strain NCCP11945).